Consider the following 309-residue polypeptide: Putative S-adenosyl-L-methionine-dependent methyltransferase Mvan_0104 (309 aa).

S-adenosyl-L-methionine-binding positions include aspartate 134 and 163–164 (DL).

It belongs to the UPF0677 family.

Functionally, exhibits S-adenosyl-L-methionine-dependent methyltransferase activity. The sequence is that of Putative S-adenosyl-L-methionine-dependent methyltransferase Mvan_0104 from Mycolicibacterium vanbaalenii (strain DSM 7251 / JCM 13017 / BCRC 16820 / KCTC 9966 / NRRL B-24157 / PYR-1) (Mycobacterium vanbaalenii).